A 226-amino-acid chain; its full sequence is PKHD-type hydroxylase PLES_48951 (226 aa).

The 101-residue stretch at 78–178 folds into the Fe2OG dioxygenase domain; it reads KVFPPLFNCY…RYASFFWTQS (101 aa). Residues His-96, Asp-98, and His-159 each contribute to the Fe cation site. Arg-169 contributes to the 2-oxoglutarate binding site.

The cofactor is Fe(2+). It depends on L-ascorbate as a cofactor.

The protein is PKHD-type hydroxylase PLES_48951 of Pseudomonas aeruginosa (strain LESB58).